The sequence spans 131 residues: MSRASSQQASPTSQTFDPSDLSTYTLDVLHHYPLVDLLQQLNAIPNDLKIPDTYSKVEQAARINVLRAICVGFAEVRRHNDNRTLQRSTMFAVNDAASRIRPSIGLKRTFPTGIFSTTIHGSPSDDDISTS.

The protein belongs to the herpesviridae small capsomere-interacting protein family. Interacts with the major capsid protein/MCP.

The protein localises to the virion. It is found in the host nucleus. Its function is as follows. Participates in the assembly of the infectious particles by decorating the outer surface of the capsid shell and thus forming a layer between the capsid and the tegument. Complexes composed of the major capsid protein and small capsomere-interacting protein/SCP assemble together in the host cytoplasm and are translocated to the nucleus, where they accumulate and participate in capsid assembly. The polypeptide is Small capsomere-interacting protein (Gallus gallus (Chicken)).